The sequence spans 372 residues: Glutamate 5-kinase (372 aa).

ATP is bound at residue Lys-14. Residues Ser-54, Asp-141, and Asn-153 each contribute to the substrate site. 173-174 (TD) contributes to the ATP binding site. One can recognise a PUA domain in the interval 280–358 (RGTLVLDDGA…ESIVRELGYM (79 aa)).

This sequence belongs to the glutamate 5-kinase family.

It localises to the cytoplasm. It carries out the reaction L-glutamate + ATP = L-glutamyl 5-phosphate + ADP. Its pathway is amino-acid biosynthesis; L-proline biosynthesis; L-glutamate 5-semialdehyde from L-glutamate: step 1/2. Catalyzes the transfer of a phosphate group to glutamate to form L-glutamate 5-phosphate. The sequence is that of Glutamate 5-kinase from Pseudomonas syringae pv. syringae (strain B728a).